The chain runs to 320 residues: Ribonuclease Z (320 aa).

His63, His65, Asp67, His68, His141, Asp212, and His270 together coordinate Zn(2+). The Proton acceptor role is filled by Asp67.

The protein belongs to the RNase Z family. As to quaternary structure, homodimer. Requires Zn(2+) as cofactor.

The catalysed reaction is Endonucleolytic cleavage of RNA, removing extra 3' nucleotides from tRNA precursor, generating 3' termini of tRNAs. A 3'-hydroxy group is left at the tRNA terminus and a 5'-phosphoryl group is left at the trailer molecule.. Its function is as follows. Zinc phosphodiesterase, which displays some tRNA 3'-processing endonuclease activity. Probably involved in tRNA maturation, by removing a 3'-trailer from precursor tRNA. The polypeptide is Ribonuclease Z (Lacticaseibacillus casei (strain BL23) (Lactobacillus casei)).